Reading from the N-terminus, the 327-residue chain is Flotillin-like protein FloA (327 aa).

The chain crosses the membrane as a helical span at residues 7–27 (FLVPILIVILLLVFFSLVPVG).

This sequence belongs to the flotillin-like FloA family. In terms of assembly, homooligomerizes.

The protein resides in the cell membrane. Its subcellular location is the membrane raft. Found in functional membrane microdomains (FMM) that may be equivalent to eukaryotic membrane rafts. FMMs are highly dynamic and increase in number as cells age. Flotillins are thought to be important factors in membrane fluidity. This is Flotillin-like protein FloA from Finegoldia magna (strain ATCC 29328 / DSM 20472 / WAL 2508) (Peptostreptococcus magnus).